The primary structure comprises 501 residues: Cytochrome P450 90A4 (501 aa).

The chain crosses the membrane as a helical span at residues 2–22; sequence AAAALLLLAAAAAAVVVAMAL. Cysteine 446 is a binding site for heme.

Belongs to the cytochrome P450 family. Heme serves as cofactor. In terms of tissue distribution, highly expressed in shoot apex and inflorenscence. Expressed in roots, stems, leaf blades and leaf sheaths.

It localises to the cell membrane. It functions in the pathway plant hormone biosynthesis; brassinosteroid biosynthesis. Its function is as follows. Catalyzes the C23-alpha-hydroxylation step in brassinosteroid biosynthesis. Converts 6-deoxocathasterone to 6-deoxoteasterone in the late C6-oxidation pathway and cathasterone to teasterone (TE) in the early C6-oxidation pathway of brassinolide (BL) biosynthesis. The chain is Cytochrome P450 90A4 from Oryza sativa subsp. japonica (Rice).